Reading from the N-terminus, the 345-residue chain is MEDERGRERGGDAAQQKTPRPECEESRPLSVEKKQRCRLDGKETDGSKFISSNGSDFSDPVYKEIAMTNGCINRMSKEELRAKLSEFKLETRGVKDVLKKRLKNYYKKQKLMLKESSAGDSYYDYICIIDFEATCEEGNPAEFLHEIIEFPVVLLNTHTLEIEDTFQQYVRPEVNAQLSEFCIGLTGITQDQVDRADAFPQVLKKVIEWMKSKELGTKYKYCILTDGSWDMSKFLSIQCRLSRLKHPAFAKKWINIRKSYGNFYKVPRSQTKLTIMLEKLGMDYDGRPHSGLDDSKNIARIAVRMLQDGCELRINEKILGGQLMSVSSSLPVEGAPAPQMPHSRK.

2 stretches are compositionally biased toward basic and acidic residues: residues 1–11 and 19–46; these read MEDERGRERGG and PRPECEESRPLSVEKKQRCRLDGKETDG. Positions 1 to 50 are disordered; the sequence is MEDERGRERGGDAAQQKTPRPECEESRPLSVEKKQRCRLDGKETDGSKFI. Residues Ser-55 and Ser-58 each carry the phosphoserine modification. An SAP domain is found at 72 to 106; that stretch reads INRMSKEELRAKLSEFKLETRGVKDVLKKRLKNYY. An Exonuclease domain is found at 126-302; that stretch reads ICIIDFEATC…DDSKNIARIA (177 aa). The Mg(2+) site is built by Asp-130 and Glu-132. Glu-132 functions as the Proton acceptor in the catalytic mechanism. AMP contacts are provided by Glu-132 and Ala-133. Asp-230 contributes to the Mg(2+) binding site. His-289 acts as the Proton acceptor in catalysis. His-289 lines the AMP pocket. Asp-294 contacts Mg(2+).

Identified in a histone pre-mRNA complex, at least composed of ERI1, LSM11, SLBP, SNRPB, SYNCRIP and YBX1. Binds to 40S and 60S ribosomal subunits and to 80S assembled ribosomes. Interacts in a cooperative manner with SLBP to the mature 3'-end of histone mRNAs. Found in a ternary complex with SLBP and the stem-loop structure of the 3'-end of histone mRNAs. It depends on Mg(2+) as a cofactor. As to expression, widely expressed with high levels in spleen, thymus and testis (at protein level).

It localises to the cytoplasm. The protein resides in the nucleus. The protein localises to the nucleolus. The catalysed reaction is Exonucleolytic cleavage in the 3'- to 5'-direction to yield nucleoside 5'-phosphates.. Its activity is regulated as follows. Although it can bind simultaneously with SLBP to the 3'-end of histone mRNA, the presence of SLBP prevents the exonuclease activity. RNA exonuclease that binds to the 3'-end of histone mRNAs and degrades them, suggesting that it plays an essential role in histone mRNA decay after replication. A 2' and 3'-hydroxyl groups at the last nucleotide of the histone 3'-end is required for efficient 3'-end histone mRNA exonuclease activity and degradation of RNA substrates. Also able to degrade the 3'-overhangs of short interfering RNAs (siRNAs) in vitro, suggesting a possible role as regulator of RNA interference (RNAi). Required for binding the 5'-ACCCA-3' sequence present in stem-loop structure. Able to bind other mRNAs. Required for 5.8S rRNA 3'-end processing. Also binds to 5.8s ribosomal RNA. Binds with high affinity to the stem-loop structure of replication-dependent histone pre-mRNAs. In vitro, does not have sequence specificity. In vitro, has weak DNA exonuclease activity. In vitro, shows biphasic kinetics such that there is rapid hydrolysis of the last three unpaired RNA nucleotides in the 39 flanking sequence followed by a much slower cleavage through the stem that occurs over a longer incubation period in the order of hours. ERI1-mediated RNA metabolism plays a key role in chondrogenesis. This Mus musculus (Mouse) protein is 3'-5' exoribonuclease 1 (Eri1).